The chain runs to 469 residues: MTSTSSENAPDHDHDHDASSPAPATATAAALPPMIPACDPHDGPACLELIEVLTTRAAAVQRRVLAEVLAMNTGTDYLRRFLGDEVVAAAGGEDELAAAFKERVPVVEYEDVKPYIERIANGAPSSLISSKPITELLTSSGTSGGQPKLMPATEEELDRKTFLYNLLVPVMNKYVEGLDEGRGMYLLFVKPEITTASGMVARPVLTSYYKSRHFRRRPDSPYTRYTSPDAAILCPDSRQSMYAQLLCGLARRGEVLRVGAVFASAFLRAVKFLEGHWRALCADIRAGRADPAVVTDAACRGAVDAVLAARADPDLADAIAAECGGASWRGIVRRLWPRTKYIDVIVTGSMAQYIPLLEFYGGGLPLVSTMYASSESYFGINLRPLDPPEEVVYTLLPNMCYYEFIKVEKDGDGEKVRDGEVVDLVGVEVGAYYELVVTTFTGERVCSPFDFFPTSCMGLSTPSDRKING.

The disordered stretch occupies residues 1 to 26; sequence MTSTSSENAPDHDHDHDASSPAPATA. The segment covering 9-18 has biased composition (basic and acidic residues); sequence APDHDHDHDA.

It belongs to the IAA-amido conjugating enzyme family.

In terms of biological role, may catalyze the synthesis of indole-3-acetic acid (IAA)-amino acid conjugates, providing a mechanism for the plant to cope with the presence of excess auxin. The sequence is that of Probable indole-3-acetic acid-amido synthetase GH3.13 (GH3.13) from Oryza sativa subsp. japonica (Rice).